Reading from the N-terminus, the 82-residue chain is Omega-conotoxin PnVIB (82 aa).

Residues 1-22 form the signal peptide; the sequence is MKLTCMMIVAVLFLTAWTVVTA. The propeptide occupies 23–52; that stretch reads EPHSSNVLENLYLKAHHEMENPEASKLNTR. Intrachain disulfides connect C56–C73, C63–C77, and C72–C81.

As to expression, expressed by the venom duct.

The protein resides in the secreted. Its function is as follows. Omega-conotoxins act at presynaptic membranes, they bind and block voltage-gated calcium channels (Cav). Acts on high voltage-activated (HVA) calcium currents in molluscan neurons. The protein is Omega-conotoxin PnVIB of Conus pennaceus (Feathered cone).